We begin with the raw amino-acid sequence, 509 residues long: Lysine--tRNA ligase (509 aa).

The segment covering 1 to 18 (MSEQNPTQAAKQAPQQEL) has biased composition (polar residues). The tract at residues 1–20 (MSEQNPTQAAKQAPQQELND) is disordered. Residues E418 and E425 each coordinate Mg(2+).

This sequence belongs to the class-II aminoacyl-tRNA synthetase family. Homodimer. It depends on Mg(2+) as a cofactor.

It localises to the cytoplasm. It carries out the reaction tRNA(Lys) + L-lysine + ATP = L-lysyl-tRNA(Lys) + AMP + diphosphate. This is Lysine--tRNA ligase from Psychromonas ingrahamii (strain DSM 17664 / CCUG 51855 / 37).